A 177-amino-acid polypeptide reads, in one-letter code: Dual-action ribosomal maturation protein DarP (177 aa).

Positions 1–12 are enriched in basic and acidic residues; the sequence is MKIVGDSEHFKQ. The disordered stretch occupies residues 1–26; the sequence is MKIVGDSEHFKQPYDSNDEYVSKTED.

This sequence belongs to the DarP family.

The protein resides in the cytoplasm. Its function is as follows. Member of a network of 50S ribosomal subunit biogenesis factors which assembles along the 30S-50S interface, preventing incorrect 23S rRNA structures from forming. Promotes peptidyl transferase center (PTC) maturation. This Shewanella oneidensis (strain ATCC 700550 / JCM 31522 / CIP 106686 / LMG 19005 / NCIMB 14063 / MR-1) protein is Dual-action ribosomal maturation protein DarP.